Consider the following 320-residue polypeptide: Delta(7)-sterol 5(6)-desaturase erg3C (320 aa).

3 helical membrane-spanning segments follow: residues 43 to 63, 91 to 111, and 127 to 147; these read VISILVLTQLGATSLYLFFSA, SSLSAIPFINILTLPWFLAEV, and PWLVVSSILYMAFNDIGIYWI. One can recognise a Fatty acid hydroxylase domain in the interval 134 to 283; it reads ILYMAFNDIG…FTWADAYFGS (150 aa). The short motif at 148 to 152 is the Histidine box-1 element; it reads HRLEH. The short motif at 161-165 is the Histidine box-2 element; sequence HKPHH. The helical transmembrane segment at 224–244 threads the bilayer; that stretch reads YMVLFAAVQIWTILIHDGDMI. Residues 259–263 carry the Histidine box-3 motif; the sequence is HTLHH.

This sequence belongs to the sterol desaturase family. Requires Fe cation as cofactor.

Its subcellular location is the endoplasmic reticulum membrane. Functionally, delta(7)-sterol 5(6)-desaturase; part of the third module of ergosterol biosynthesis pathway that includes the late steps of the pathway. Erg3C is a minor delta(7)-sterol 5(6)-desaturase within the ergosterol pathway, erg3B being the major one. The third module or late pathway involves the ergosterol synthesis itself through consecutive reactions that mainly occur in the endoplasmic reticulum (ER) membrane. Firstly, the squalene synthase erg9 catalyzes the condensation of 2 farnesyl pyrophosphate moieties to form squalene, which is the precursor of all steroids. Squalene synthase is crucial for balancing the incorporation of farnesyl diphosphate (FPP) into sterol and nonsterol isoprene synthesis. Secondly, squalene is converted into lanosterol by the consecutive action of the squalene epoxidase erg1 and the lanosterol synthase erg7. Then, the delta(24)-sterol C-methyltransferase erg6 methylates lanosterol at C-24 to produce eburicol. Eburicol is the substrate of the sterol 14-alpha demethylase encoded by cyp51A and cyp51B, to yield 4,4,24-trimethyl ergosta-8,14,24(28)-trienol. The C-14 reductase erg24 then reduces the C14=C15 double bond which leads to 4,4-dimethylfecosterol. A sequence of further demethylations at C-4, involving the C-4 demethylation complex containing the C-4 methylsterol oxidases erg25A or erg25B, the sterol-4-alpha-carboxylate 3-dehydrogenase erg26 and the 3-keto-steroid reductase erg27, leads to the production of fecosterol via 4-methylfecosterol. The C-8 sterol isomerase erg2 then catalyzes the reaction which results in unsaturation at C-7 in the B ring of sterols and thus converts fecosterol to episterol. The sterol-C5-desaturase erg3B then catalyzes the introduction of a C-5 double bond in the B ring to produce 5-dehydroepisterol. The 2 other sterol-C5-desaturases, erg3A and erg3C, seem to be less important in ergosterol biosynthesis. The C-22 sterol desaturase erg5 further converts 5-dehydroepisterol into ergosta-5,7,22,24(28)-tetraen-3beta-ol by forming the C-22(23) double bond in the sterol side chain. Finally, ergosta-5,7,22,24(28)-tetraen-3beta-ol is substrate of the C-24(28) sterol reductases erg4A and erg4B to produce ergosterol. Possible alternative sterol biosynthetic pathways might exist from fecosterol to ergosterol, depending on the activities of the erg3 isoforms. This Aspergillus fumigatus (strain ATCC MYA-4609 / CBS 101355 / FGSC A1100 / Af293) (Neosartorya fumigata) protein is Delta(7)-sterol 5(6)-desaturase erg3C.